The chain runs to 190 residues: E3 ubiquitin-protein ligase RNF4 (190 aa).

A required for ubiquitination activity region spans residues 1 to 16 (MSTRKRRGGAINSRQA). Residues 1–29 (MSTRKRRGGAINSRQAQKRTREATSTPEI) form a disordered region. Residues 4 to 61 (RKRRGGAINSRQAQKRTREATSTPEISLEAEPIELVETAGDEIVDLTCESLEPVVVDL) form a mediates interaction with TRPS1 region. 4 consecutive short sequence motifs (SUMO interaction motif) follow at residues 36 to 39 (IELV), 46 to 49 (IVDL), 57 to 59 (VVV), and 67 to 70 (VVIV). Phosphoserine occurs at positions 94 and 95. Zn(2+) contacts are provided by C132, C135, C154, H156, C159, C162, C173, and C176. The RING-type zinc finger occupies 132–177 (CPICMDGYSEIVQNGRLIVSTECGHVFCSQCLRDSLKNANTCPTCR).

Homodimer (via RING-type zinc finger domain). Interacts with GSC2. Interacts with AR/the androgen receptor and TBP. Interacts with TCF20. Interacts with PATZ1. Interacts with TRPS1; negatively regulates TRPS1 transcriptional repressor activity. Interacts with PML (isoform PML-1, isoform PML-2, isoform PML-3, isoform PML-4, isoform PML-5 and isoform PML-6). Interacts with PRDM1/Blimp-1. Post-translationally, sumoylated; conjugated by one or two SUMO1 moieties. In terms of processing, autoubiquitinated. In terms of tissue distribution, widely expressed at low levels in many tissues; highly expressed in testis.

It is found in the cytoplasm. Its subcellular location is the nucleus. The protein localises to the PML body. The catalysed reaction is S-ubiquitinyl-[E2 ubiquitin-conjugating enzyme]-L-cysteine + [acceptor protein]-L-lysine = [E2 ubiquitin-conjugating enzyme]-L-cysteine + N(6)-ubiquitinyl-[acceptor protein]-L-lysine.. The protein operates within protein modification; protein ubiquitination. E3 ubiquitin-protein ligase which binds polysumoylated chains covalently attached to proteins and mediates 'Lys-6'-, 'Lys-11'-, 'Lys-48'- and 'Lys-63'-linked polyubiquitination of those substrates and their subsequent targeting to the proteasome for degradation. Regulates the degradation of several proteins including PML and the transcriptional activator PEA3. Involved in chromosome alignment and spindle assembly, it regulates the kinetochore CENPH-CENPI-CENPK complex by targeting polysumoylated CENPI to proteasomal degradation. Regulates the cellular responses to hypoxia and heat shock through degradation of respectively EPAS1 and PARP1. Alternatively, it may also bind DNA/nucleosomes and have a more direct role in the regulation of transcription for instance enhancing basal transcription and steroid receptor-mediated transcriptional activation. Catalyzes ubiquitination of sumoylated PARP1 in response to PARP1 trapping to chromatin, leading to PARP1 removal from chromatin by VCP/p97. This is E3 ubiquitin-protein ligase RNF4 from Homo sapiens (Human).